A 128-amino-acid polypeptide reads, in one-letter code: 14 kDa zinc-binding protein (128 aa).

The HIT domain maps to 18 to 128; the sequence is IFDKIIKKEI…GGRQMNWPPG (111 aa). The short motif at 112 to 116 is the Histidine triad motif element; that stretch reads HIHVH.

As to quaternary structure, homodimer.

The chain is 14 kDa zinc-binding protein (ZBP14) from Zea mays (Maize).